Reading from the N-terminus, the 191-residue chain is uncharacterized protein (191 aa).

Positions 1 to 22 are cleaved as a signal peptide; sequence MKSLRLMLCAMPLMLTGCSTMS.

This is an uncharacterized protein from Escherichia coli (strain K12).